The chain runs to 944 residues: Leucine--tRNA ligase (944 aa).

The 'HIGH' region motif lies at 40 to 51 (PYPSGAGLHVGH). The 'KMSKS' region motif lies at 718-722 (KMSKS). Position 721 (lysine 721) interacts with ATP.

This sequence belongs to the class-I aminoacyl-tRNA synthetase family.

The protein localises to the cytoplasm. It catalyses the reaction tRNA(Leu) + L-leucine + ATP = L-leucyl-tRNA(Leu) + AMP + diphosphate. In Bacteroides thetaiotaomicron (strain ATCC 29148 / DSM 2079 / JCM 5827 / CCUG 10774 / NCTC 10582 / VPI-5482 / E50), this protein is Leucine--tRNA ligase.